Consider the following 379-residue polypeptide: Homoserine O-succinyltransferase (379 aa).

One can recognise an AB hydrolase-1 domain in the interval 48 to 357; that stretch reads NAVLICHALS…SAHGHDAFLM (310 aa). Ser154 functions as the Nucleophile in the catalytic mechanism. Arg224 serves as a coordination point for substrate. Catalysis depends on residues Asp319 and His352. Position 353 (Asp353) interacts with substrate.

This sequence belongs to the AB hydrolase superfamily. MetX family. In terms of assembly, homodimer.

Its subcellular location is the cytoplasm. The catalysed reaction is L-homoserine + succinyl-CoA = O-succinyl-L-homoserine + CoA. It functions in the pathway amino-acid biosynthesis; L-methionine biosynthesis via de novo pathway; O-succinyl-L-homoserine from L-homoserine: step 1/1. Activity increases in the presence of MetW. Functionally, transfers a succinyl group from succinyl-CoA to L-homoserine, forming succinyl-L-homoserine. This is Homoserine O-succinyltransferase from Neisseria gonorrhoeae.